The primary structure comprises 120 residues: Chaperonin GroEL (120 aa).

23–27 is a binding site for ATP; that stretch reads DGTTT.

This sequence belongs to the chaperonin (HSP60) family. Forms a cylinder of 14 subunits composed of two heptameric rings stacked back-to-back. Interacts with the co-chaperonin GroES.

It localises to the cytoplasm. It catalyses the reaction ATP + H2O + a folded polypeptide = ADP + phosphate + an unfolded polypeptide.. Functionally, together with its co-chaperonin GroES, plays an essential role in assisting protein folding. The GroEL-GroES system forms a nano-cage that allows encapsulation of the non-native substrate proteins and provides a physical environment optimized to promote and accelerate protein folding. The polypeptide is Chaperonin GroEL (Mycobacterium xenopi).